A 203-amino-acid chain; its full sequence is Ribonuclease HII (203 aa).

The region spanning 18–203 (GQYAGVDEVG…SFRPVREALA (186 aa)) is the RNase H type-2 domain. A divalent metal cation is bound by residues Asp-24, Glu-25, and Asp-116.

The protein belongs to the RNase HII family. Mn(2+) is required as a cofactor. It depends on Mg(2+) as a cofactor.

The protein localises to the cytoplasm. It catalyses the reaction Endonucleolytic cleavage to 5'-phosphomonoester.. Functionally, endonuclease that specifically degrades the RNA of RNA-DNA hybrids. In Shewanella pealeana (strain ATCC 700345 / ANG-SQ1), this protein is Ribonuclease HII.